A 347-amino-acid chain; its full sequence is uncharacterized protein (347 aa).

Disordered stretches follow at residues 1–40 (MAQE…SNSM), 72–92 (SCED…IQGS), 133–158 (SDST…QLTL), 173–209 (ENQK…QVSH), and 306–347 (EDPR…PPDF). Over residues 15 to 25 (PGQNITETTTD) the composition is skewed to polar residues. A compositionally biased stretch (basic and acidic residues) spans 143–154 (GDNKDKHPKEKT). Positions 179 to 194 (KDDDSVFPESAQEEDS) are enriched in acidic residues. The segment covering 195 to 209 (QLPSSSLPGMAQVSH) has biased composition (polar residues). Over residues 306 to 318 (EDPREANERPREL) the composition is skewed to basic and acidic residues. Residues 319-330 (ARKKRFSYRSKR) show a composition bias toward basic residues.

This is an uncharacterized protein from Bos taurus (Bovine).